We begin with the raw amino-acid sequence, 345 residues long: Class I histocompatibility antigen, F10 alpha chain (345 aa).

The first 22 residues, methionine 1–proline 22, serve as a signal peptide directing secretion. Residues glutamate 23 to glycine 110 are alpha-1. Topologically, residues glutamate 23–proline 301 are extracellular. 2 N-linked (GlcNAc...) asparagine glycosylation sites follow: asparagine 59 and asparagine 107. The tract at residues glycine 111–arginine 201 is alpha-2. Disulfide bonds link cysteine 121/cysteine 183 and cysteine 221/cysteine 277. Positions glutamate 202 to tryptophan 292 are alpha-3. An Ig-like C1-type domain is found at proline 204–glutamate 293. The connecting peptide stretch occupies residues glutamate 293–proline 301. Residues isoleucine 302 to tyrosine 324 form a helical membrane-spanning segment. Topologically, residues arginine 325–isoleucine 345 are cytoplasmic.

This sequence belongs to the MHC class I family. In terms of assembly, heterodimer of an alpha chain and a beta chain (beta-2-microglobulin).

The protein localises to the membrane. Functionally, involved in the presentation of foreign antigens to the immune system. The protein is Class I histocompatibility antigen, F10 alpha chain of Gallus gallus (Chicken).